Consider the following 355-residue polypeptide: Small ribosomal subunit protein uS2 (355 aa).

The protein belongs to the universal ribosomal protein uS2 family.

The sequence is that of Small ribosomal subunit protein uS2 from Methylorubrum extorquens (strain CM4 / NCIMB 13688) (Methylobacterium extorquens).